The chain runs to 817 residues: Leucine--tRNA ligase (817 aa).

The 'HIGH' region signature appears at 51 to 61 (PYPSGDLHVGH). The 'KMSKS' region signature appears at 588 to 592 (RMSKS). Lys591 serves as a coordination point for ATP.

It belongs to the class-I aminoacyl-tRNA synthetase family.

It is found in the cytoplasm. The enzyme catalyses tRNA(Leu) + L-leucine + ATP = L-leucyl-tRNA(Leu) + AMP + diphosphate. The protein is Leucine--tRNA ligase of Rubrobacter xylanophilus (strain DSM 9941 / JCM 11954 / NBRC 16129 / PRD-1).